A 279-amino-acid chain; its full sequence is Elongation factor Ts (279 aa).

The interval 80-83 (TDFV) is involved in Mg(2+) ion dislocation from EF-Tu.

It belongs to the EF-Ts family.

It is found in the cytoplasm. In terms of biological role, associates with the EF-Tu.GDP complex and induces the exchange of GDP to GTP. It remains bound to the aminoacyl-tRNA.EF-Tu.GTP complex up to the GTP hydrolysis stage on the ribosome. This Borreliella burgdorferi (strain ZS7) (Borrelia burgdorferi) protein is Elongation factor Ts.